We begin with the raw amino-acid sequence, 347 residues long: NADH-ubiquinone oxidoreductase chain 2 (347 aa).

The next 11 helical transmembrane spans lie at 1–21, 25–45, 59–79, 96–116, 123–143, 153–173, 178–198, 200–220, 239–259, 278–298, and 325–345; these read MNPLVTLIIYITLISGTIITM, HWLTVWMGLEMNMFAIIPLIM, YFLIQASASMLLLMAATINFM, TIILAAIMMKLGMAPFHFWVP, LLSTSLIILTWQKLAPLSILY, IILASAMLSIMIGGWGGLNQT, IMAYSSIAHMGWMSAILIYNP, LMLLNLTLYIIFTITMFTILI, ILMMTLLLTLLSMGGLPPLSG, ISLTMAMLALLNLYFYMRLIY, and FLPTLTIISILMLPITPMMFI.

It belongs to the complex I subunit 2 family. Core subunit of respiratory chain NADH dehydrogenase (Complex I) which is composed of 45 different subunits. Interacts with TMEM242.

It localises to the mitochondrion inner membrane. It carries out the reaction a ubiquinone + NADH + 5 H(+)(in) = a ubiquinol + NAD(+) + 4 H(+)(out). Its function is as follows. Core subunit of the mitochondrial membrane respiratory chain NADH dehydrogenase (Complex I) that is believed to belong to the minimal assembly required for catalysis. Complex I functions in the transfer of electrons from NADH to the respiratory chain. The immediate electron acceptor for the enzyme is believed to be ubiquinone. The polypeptide is NADH-ubiquinone oxidoreductase chain 2 (Oryzorictes hova (Hova rice tenrec)).